We begin with the raw amino-acid sequence, 456 residues long: Ezy-1 protein (456 aa).

The first 28 residues, Met1–Ala28, serve as a signal peptide directing secretion. Disordered stretches follow at residues Ser167–Gly189, Phe273–Gly310, and Gln414–Met456. Positions Ala281–Glu293 are enriched in acidic residues. Positions Asp418–Glu428 are enriched in basic and acidic residues.

In Chlamydomonas reinhardtii (Chlamydomonas smithii), this protein is Ezy-1 protein (Ezy-1).